Consider the following 102-residue polypeptide: MAFQLRIVQHLLHITFLRLPLAYPSQIHQRENERMFLLRIHRQDVQHLSHRRLRQLNEHRSLLPKGFPFKLLRPLPQLQRLLSQVCRGSVRIDACCCIPSCH.

Positions 1–22 (MAFQLRIVQHLLHITFLRLPLA) are cleaved as a signal peptide. Residues 51–60 (RRLRQLNEHR) carry the RxLR-dEER motif.

It belongs to the RxLR effector family.

It is found in the secreted. Its subcellular location is the host chloroplast envelope. It localises to the host cytoplasm. The protein resides in the host nucleus. In terms of biological role, effector that partially suppresses the tobacco programmed cell death induced by cell death-inducing proteins. The chain is Secreted RxLR effector protein 61 from Plasmopara viticola (Downy mildew of grapevine).